The chain runs to 374 residues: (R)-phenyllactyl-CoA dehydratase beta subunit (374 aa).

Belongs to the FldB/FldC dehydratase alpha/beta subunit family. Part of the heterotrimeric phenyllactate dehydratase complex FldABC, composed of (R)-phenyllactate CoA-transferase (FldA) and a heterodimeric (R)-phenyllactyl-CoA dehydratase (FldB and FldC). Requires [4Fe-4S] cluster as cofactor. The cofactor is No flavin could be detected in the FldABC complex, and the addition of FAD, FMN or riboflavin to the dehydratase do not increase enzymatic activity..

The catalysed reaction is (R)-3-phenyllactoyl-CoA = (E)-cinnamoyl-CoA + H2O. It carries out the reaction (R)-3-(4-hydroxyphenyl)lactoyl-CoA = (E)-4-coumaroyl-CoA + H2O. It catalyses the reaction (R)-3-(indol-3-yl)lactoyl-CoA = (E)-3-(indol-3-yl)acryloyl-CoA + H2O. It participates in amino-acid degradation; L-phenylalanine degradation. Functionally, component of the phenyllactate dehydratase complex FldABC that is involved in the fermentation of L-phenylalanine via a Stickland reaction. This complex catalyzes the reversible syn-dehydration of (R)-phenyllactate to (E)-cinnamate in two steps, a CoA-transfer from cinnamoyl-CoA to phenyllactate, catalyzed by FldA, followed by the dehydration of phenyllactyl-CoA to cinnamoyl-CoA, catalyzed by FldB and FldC. Requires the activator FldI to initiate catalysis. In Clostridium sporogenes, this protein is (R)-phenyllactyl-CoA dehydratase beta subunit.